Reading from the N-terminus, the 334-residue chain is N-acetyl-gamma-glutamyl-phosphate reductase (334 aa).

Residue C154 is part of the active site.

It belongs to the NAGSA dehydrogenase family. Type 1 subfamily.

Its subcellular location is the cytoplasm. The enzyme catalyses N-acetyl-L-glutamate 5-semialdehyde + phosphate + NADP(+) = N-acetyl-L-glutamyl 5-phosphate + NADPH + H(+). The protein operates within amino-acid biosynthesis; L-arginine biosynthesis; N(2)-acetyl-L-ornithine from L-glutamate: step 3/4. Functionally, catalyzes the NADPH-dependent reduction of N-acetyl-5-glutamyl phosphate to yield N-acetyl-L-glutamate 5-semialdehyde. The protein is N-acetyl-gamma-glutamyl-phosphate reductase of Aliivibrio fischeri (strain ATCC 700601 / ES114) (Vibrio fischeri).